The sequence spans 917 residues: Translation initiation factor IF-2 (917 aa).

Disordered stretches follow at residues 1–84 and 150–318; these read MSDG…GRAG and KESE…DRER. Over residues 10-27 the composition is skewed to polar residues; that stretch reads DGNNTPSQGGEQTRSSRL. Low complexity-rich tracts occupy residues 69–84, 154–177, and 227–236; these read AAGP…GRAG, QQAA…AAEA, and SRPAAAAPAR. Over residues 265–274 the composition is skewed to pro residues; the sequence is GAPPAPPRRP. The span at 282–305 shows a compositional bias: basic and acidic residues; sequence GGSDRRSGRIDVRAAIEGDDDKTR. One can recognise a tr-type G domain in the interval 416–586; that stretch reads PRAPVVTVMG…LLQSEMLDLK (171 aa). The segment at 425-432 is G1; it reads GHVDHGKT. 425 to 432 contributes to the GTP binding site; the sequence is GHVDHGKT. A G2 region spans residues 450–454; sequence GITQH. Positions 472 to 475 are G3; sequence DTPG. GTP-binding positions include 472–476 and 526–529; these read DTPGH and NKID. Positions 526–529 are G4; the sequence is NKID. Residues 562–564 are G5; it reads SAL.

It belongs to the TRAFAC class translation factor GTPase superfamily. Classic translation factor GTPase family. IF-2 subfamily.

The protein localises to the cytoplasm. In terms of biological role, one of the essential components for the initiation of protein synthesis. Protects formylmethionyl-tRNA from spontaneous hydrolysis and promotes its binding to the 30S ribosomal subunits. Also involved in the hydrolysis of GTP during the formation of the 70S ribosomal complex. This is Translation initiation factor IF-2 from Gluconobacter oxydans (strain 621H) (Gluconobacter suboxydans).